The primary structure comprises 618 residues: 1-deoxy-D-xylulose-5-phosphate synthase (618 aa).

Thiamine diphosphate-binding positions include histidine 72 and 113-115; that span reads GHA. Mg(2+) is bound at residue aspartate 144. Thiamine diphosphate contacts are provided by residues 145–146, asparagine 173, histidine 284, and glutamate 359; that span reads GA. Asparagine 173 provides a ligand contact to Mg(2+).

This sequence belongs to the transketolase family. DXPS subfamily. Homodimer. Mg(2+) serves as cofactor. The cofactor is thiamine diphosphate.

It carries out the reaction D-glyceraldehyde 3-phosphate + pyruvate + H(+) = 1-deoxy-D-xylulose 5-phosphate + CO2. It participates in metabolic intermediate biosynthesis; 1-deoxy-D-xylulose 5-phosphate biosynthesis; 1-deoxy-D-xylulose 5-phosphate from D-glyceraldehyde 3-phosphate and pyruvate: step 1/1. Functionally, catalyzes the acyloin condensation reaction between C atoms 2 and 3 of pyruvate and glyceraldehyde 3-phosphate to yield 1-deoxy-D-xylulose-5-phosphate (DXP). The chain is 1-deoxy-D-xylulose-5-phosphate synthase from Dictyoglomus thermophilum (strain ATCC 35947 / DSM 3960 / H-6-12).